Consider the following 306-residue polypeptide: MIPDLSVNFAGIKLKNPVLTASGTFGYGYELADLIPLKRLGGVVTKTVTLEPRAGNLQPRIAEVASGILNSIGLQNIGVRAFIEEPLEKLNKIGVPVIVSVAGVAVGEYVEIVKILSSQNGVSAIELNLSCPNLKKKIVCHDLPLMRDVIRGVKKVSRVPVIAKLSPLVTDISELALTAQNAGADGVTLTNTYPAMAVDIRTFKPKLSTVKGGMSGACIKPMSVRCVYDAYQDIKIPIIGCGGIMMGEDAVEFILAGATAVSVGSSSLVSPGNLIAIIDGIEDILKEKNIKSVKKIIGGINKVRNA.

Residues Ser-22 and 46-47 (KT) each bind FMN. Substrate-binding positions include Lys-46, 70 to 74 (NSIGL), and Asn-128. Asn-128 lines the FMN pocket. Catalysis depends on Cys-131, which acts as the Nucleophile. Lys-164 is a binding site for FMN. 191-192 (NT) lines the substrate pocket. FMN-binding positions include Gly-216, 242 to 243 (GG), and 264 to 265 (GS).

The protein belongs to the dihydroorotate dehydrogenase family. Type 1 subfamily. Heterotetramer of 2 PyrK and 2 PyrD type B subunits. FMN serves as cofactor.

It is found in the cytoplasm. The catalysed reaction is (S)-dihydroorotate + NAD(+) = orotate + NADH + H(+). Its pathway is pyrimidine metabolism; UMP biosynthesis via de novo pathway; orotate from (S)-dihydroorotate (NAD(+) route): step 1/1. Functionally, catalyzes the conversion of dihydroorotate to orotate with NAD(+) as electron acceptor. This Endomicrobium trichonymphae protein is Dihydroorotate dehydrogenase B (NAD(+)), catalytic subunit (pyrD).